A 494-amino-acid chain; its full sequence is Calmodulin-binding protein 60 A (494 aa).

The tract at residues 1–62 (MRIPTYDFGS…AGIKWICEKE (62 aa)) is calmodulin-binding. Positions 132-252 (VSDWTDEDIR…AFHRRLNLSN (121 aa)) are DNA-binding.

It belongs to the plant ACBP60 protein family. Interacts with calmodulin (CaM). Expressed in stems, flowers and root.

The protein resides in the nucleus. In terms of biological role, transcription activator that binds DNA in a sequence-specific manner, likely 5'-GAAATTTTGG-3', to promote the expression of target genes. The protein is Calmodulin-binding protein 60 A of Arabidopsis thaliana (Mouse-ear cress).